Here is a 365-residue protein sequence, read N- to C-terminus: tRNA(Met) cytidine acetate ligase (365 aa).

ATP is bound by residues 7 to 20 (IAEF…HKYL), Gly-96, Asn-152, and Arg-175.

This sequence belongs to the TmcAL family.

The protein resides in the cytoplasm. It carries out the reaction cytidine(34) in elongator tRNA(Met) + acetate + ATP = N(4)-acetylcytidine(34) in elongator tRNA(Met) + AMP + diphosphate. Catalyzes the formation of N(4)-acetylcytidine (ac(4)C) at the wobble position of elongator tRNA(Met), using acetate and ATP as substrates. First activates an acetate ion to form acetyladenylate (Ac-AMP) and then transfers the acetyl group to tRNA to form ac(4)C34. This Streptococcus pneumoniae (strain 70585) protein is tRNA(Met) cytidine acetate ligase.